We begin with the raw amino-acid sequence, 538 residues long: Cryptic outer membrane porin BglH (538 aa).

The N-terminal stretch at 1 to 25 (MFRRNLITSAILLMAPLAFSAQSLA) is a signal peptide. A disordered region spans residues 52–82 (KDEEKKKYTPATVNRSVSTNDQGYAANPFPT). Over residues 62–73 (ATVNRSVSTNDQ) the composition is skewed to polar residues.

It belongs to the porin LamB (TC 1.B.3) family. In terms of assembly, homomonomer; no physical evidence of a homotrimer has been found, however conductance experiments suggest it may be a homotrimer. The monomer probably consists of 18 antiparallel beta-strands.

The protein localises to the cell outer membrane. Part of a cryptic operon that is poorly expressed in vivo. May be an ancestral sugar porin with a broad carbohydrate specificity; it binds aromatic beta-D-glucosides such as arbutin and salicin, but with low affinity compared to the binding of maltooligosaccharides to the LamB porin. This is Cryptic outer membrane porin BglH (bglH) from Escherichia coli (strain K12).